The following is a 92-amino-acid chain: Small ribosomal subunit protein uS19 (92 aa).

This sequence belongs to the universal ribosomal protein uS19 family.

Protein S19 forms a complex with S13 that binds strongly to the 16S ribosomal RNA. The chain is Small ribosomal subunit protein uS19 from Geobacillus kaustophilus (strain HTA426).